Here is a 29-residue protein sequence, read N- to C-terminus: Toxin Bl-4 (29 aa).

This sequence belongs to the long (4 C-C) scorpion toxin superfamily. Sodium channel inhibitor family. Beta subfamily. Expressed by the venom gland.

Its subcellular location is the secreted. Its function is as follows. Excitatory insect beta-toxins induce a spastic paralysis. They bind voltage-independently at site-4 of sodium channels (Nav) and shift the voltage of activation toward more negative potentials thereby affecting sodium channel activation and promoting spontaneous and repetitive firing. The fraction to which this protein belongs exhibits low toxicity and induces transient paralysis in all insects tested (the crickets A.domesticus). The polypeptide is Toxin Bl-4 (Buthacus leptochelys (Egyptian fat-tailed scorpion)).